A 290-amino-acid polypeptide reads, in one-letter code: Arylamine N-acetyltransferase 1 (290 aa).

The residue at position 1 (methionine 1) is an N-acetylmethionine. Serine 103 contacts CoA. 106-107 (IH) lines the substrate pocket. Tyrosine 208 serves as a coordination point for CoA.

Belongs to the arylamine N-acetyltransferase family.

It localises to the cytoplasm. It catalyses the reaction an arylamine + acetyl-CoA = an N-acetylarylamine + CoA. Its function is as follows. Participates in the detoxification of a plethora of hydrazine and arylamine drugs. The chain is Arylamine N-acetyltransferase 1 (NAT1) from Bos taurus (Bovine).